The primary structure comprises 357 residues: N-acetyl-gamma-glutamyl-phosphate reductase (357 aa).

Cys-160 is a catalytic residue.

The protein belongs to the NAGSA dehydrogenase family. Type 1 subfamily.

It localises to the cytoplasm. It carries out the reaction N-acetyl-L-glutamate 5-semialdehyde + phosphate + NADP(+) = N-acetyl-L-glutamyl 5-phosphate + NADPH + H(+). It participates in amino-acid biosynthesis; L-arginine biosynthesis; N(2)-acetyl-L-ornithine from L-glutamate: step 3/4. Functionally, catalyzes the NADPH-dependent reduction of N-acetyl-5-glutamyl phosphate to yield N-acetyl-L-glutamate 5-semialdehyde. This is N-acetyl-gamma-glutamyl-phosphate reductase from Parasynechococcus marenigrum (strain WH8102).